A 142-amino-acid chain; its full sequence is MAKKVSAIIKLQVAAGSANPSPPVGPALGQHGVNIMEFCKAFNAQTDSLEKGAPVPVEITVFEDRSFTFITKTPPASFLLKKAAGIKSGSGEPNTKKVGTVTRAQLEEIAKTKEPDLTAADMDAAVRTIAGSARAMGLNVEG.

This sequence belongs to the universal ribosomal protein uL11 family. In terms of assembly, part of the ribosomal stalk of the 50S ribosomal subunit. Interacts with L10 and the large rRNA to form the base of the stalk. L10 forms an elongated spine to which L12 dimers bind in a sequential fashion forming a multimeric L10(L12)X complex. Post-translationally, one or more lysine residues are methylated.

Forms part of the ribosomal stalk which helps the ribosome interact with GTP-bound translation factors. In Idiomarina loihiensis (strain ATCC BAA-735 / DSM 15497 / L2-TR), this protein is Large ribosomal subunit protein uL11.